A 147-amino-acid chain; its full sequence is SILISFPVQLNWHRDQAGSWGGLDLTNNLANWTPWEEDVWEPDVRAENCDSSLNRTYAISSSLVSFYIPVAIMIVTYTRIYRIAQVQIRRISSLERAAEHAQSCRSSAACAPDTSLRASIKKETKVLKTLSVIMGVFVCCWLPFFIL.

A helical transmembrane segment spans residues 1–12 (SILISFPVQLNW). Over 13–55 (HRDQAGSWGGLDLTNNLANWTPWEEDVWEPDVRAENCDSSLNR) the chain is Extracellular. Asparagine 54 carries N-linked (GlcNAc...) asparagine glycosylation. A helical transmembrane segment spans residues 56–78 (TYAISSSLVSFYIPVAIMIVTYT). Topologically, residues 79 to 128 (RIYRIAQVQIRRISSLERAAEHAQSCRSSAACAPDTSLRASIKKETKVLK) are cytoplasmic. The helical transmembrane segment at 129-147 (TLSVIMGVFVCCWLPFFIL) threads the bilayer.

This sequence belongs to the G-protein coupled receptor 1 family.

Its subcellular location is the cell membrane. Dopamine receptor whose activity is mediated by G proteins which activate adenylyl cyclase. This is D(1B) dopamine receptor (DRD5) from Macaca mulatta (Rhesus macaque).